The sequence spans 209 residues: MKDYKNELKVKVDLGENLRGSIPGLIKKVMYKTQYLEIQVEKKNLLPVLRFLKESSKYQCTMLLDIVCIDCLNIEEIKIGRFKIIYVLNSIYNNTRVHISTYVENNGIIETTSGLFESSVWLEREIWDMFGIYFEKHPDLRRILTDYGFVGYPLKKDFPITGYLEVYYDVADKKIIYKPIELMQEYRNYNFGAVWGDYERKVYLENIIK.

This sequence belongs to the complex I 30 kDa subunit family. In terms of assembly, complex I is composed of about 30 different subunits.

It is found in the mitochondrion inner membrane. It catalyses the reaction a ubiquinone + NADH + 5 H(+)(in) = a ubiquinol + NAD(+) + 4 H(+)(out). In terms of biological role, core subunit of the mitochondrial membrane respiratory chain NADH dehydrogenase (Complex I) that is believed to belong to the minimal assembly required for catalysis. Complex I functions in the transfer of electrons from NADH to the respiratory chain. The immediate electron acceptor for the enzyme is believed to be ubiquinone. The polypeptide is NADH-ubiquinone oxidoreductase subunit 9 (nad9) (Dictyostelium citrinum (Slime mold)).